A 322-amino-acid polypeptide reads, in one-letter code: L-asparaginase (322 aa).

An Asparaginase/glutaminase domain is found at Lys-3–Tyr-322. Catalysis depends on Thr-13, which acts as the O-isoaspartyl threonine intermediate. Residues Ser-56 and Thr-89 to Asp-90 each bind substrate.

This sequence belongs to the asparaginase 1 family. Homotetramer.

The protein resides in the cytoplasm. It catalyses the reaction L-asparagine + H2O = L-aspartate + NH4(+). This chain is L-asparaginase (ansA), found in Bacillus licheniformis.